Here is a 112-residue protein sequence, read N- to C-terminus: Inner membrane assembly complex subunit 17 (112 aa).

A mitochondrion-targeting transit peptide spans 1-24 (MLRKLPINFAKWTVKKVPVQQKRF). At 25-44 (NSQQKEISPHIMFYKNYARP) the chain is on the mitochondrial matrix side. The helical transmembrane segment at 45–62 (LGKVTLFALATYYGLEIV) threads the bilayer. Over 63–112 (WWKLDASEQEAIKNSKLLICESSFSLLTFRRITEFRECEIKTRDLYDPEI) the chain is Mitochondrial intermembrane.

The protein belongs to the INA17 family. Component of the inner membrane assembly (INA) complex. Interacts with a subset of F(1)F(0)-ATP synthase subunits of the F(1)-domain and the peripheral stalk.

It localises to the mitochondrion inner membrane. In terms of biological role, component of the INA complex (INAC) that promotes the biogenesis of mitochondrial F(1)F(0)-ATP synthase. INAC facilitates the assembly of the peripheral stalk and promotes the assembly of the catalytic F(1)-domain with the membrane-embedded F(0)-domain. This Schizosaccharomyces pombe (strain 972 / ATCC 24843) (Fission yeast) protein is Inner membrane assembly complex subunit 17.